We begin with the raw amino-acid sequence, 276 residues long: Dermonecrotic toxin LlSicTox-alphaIV1i (276 aa).

His5 is a catalytic residue. The Mg(2+) site is built by Glu25 and Asp27. Residue His41 is the Nucleophile of the active site. Disulfide bonds link Cys45–Cys51 and Cys47–Cys193. Residue Asp85 coordinates Mg(2+).

Belongs to the arthropod phospholipase D family. Class II subfamily. The cofactor is Mg(2+). As to expression, expressed by the venom gland.

The protein localises to the secreted. It carries out the reaction an N-(acyl)-sphingosylphosphocholine = an N-(acyl)-sphingosyl-1,3-cyclic phosphate + choline. The enzyme catalyses an N-(acyl)-sphingosylphosphoethanolamine = an N-(acyl)-sphingosyl-1,3-cyclic phosphate + ethanolamine. The catalysed reaction is a 1-acyl-sn-glycero-3-phosphocholine = a 1-acyl-sn-glycero-2,3-cyclic phosphate + choline. It catalyses the reaction a 1-acyl-sn-glycero-3-phosphoethanolamine = a 1-acyl-sn-glycero-2,3-cyclic phosphate + ethanolamine. Dermonecrotic toxins cleave the phosphodiester linkage between the phosphate and headgroup of certain phospholipids (sphingolipid and lysolipid substrates), forming an alcohol (often choline) and a cyclic phosphate. This toxin acts on sphingomyelin (SM). It may also act on ceramide phosphoethanolamine (CPE), lysophosphatidylcholine (LPC) and lysophosphatidylethanolamine (LPE), but not on lysophosphatidylserine (LPS), and lysophosphatidylglycerol (LPG). It acts by transphosphatidylation, releasing exclusively cyclic phosphate products as second products. Induces dermonecrosis, hemolysis, increased vascular permeability, edema, inflammatory response, and platelet aggregation. This is Dermonecrotic toxin LlSicTox-alphaIV1i from Loxosceles laeta (South American recluse spider).